The sequence spans 322 residues: MSSLRHATEIATTRWPAAAEPRPAALNHLHQLEAESIAILREVAAEFRKPVMLYSIGKDSSVLLHLAMKAFHPAKPPFPLLHIDTTWKFRDMIAFRDQRARELGLELLVHVNPEGLAQKISPFTHGSALYTDVMKTQALRQALDAHGFDAAIGGARRDEEKSRAKERIFSHRSATHRWDPKNQRPELWHLYNTMLAPGESMRVFPLSNWTELDVWDYIQLERIPIVPLYFAARRPVVERDGALIMVDDERMPLRPGETPQWRSIRFRTLGCYPLTGATPSTASDLAAIIREMRTSRTSERQGRVIDRDSAASMERKKVEGYF.

Belongs to the PAPS reductase family. CysD subfamily. In terms of assembly, heterodimer composed of CysD, the smaller subunit, and CysN.

It carries out the reaction sulfate + ATP + H(+) = adenosine 5'-phosphosulfate + diphosphate. The protein operates within sulfur metabolism; hydrogen sulfide biosynthesis; sulfite from sulfate: step 1/3. In terms of biological role, with CysN forms the ATP sulfurylase (ATPS) that catalyzes the adenylation of sulfate producing adenosine 5'-phosphosulfate (APS) and diphosphate, the first enzymatic step in sulfur assimilation pathway. APS synthesis involves the formation of a high-energy phosphoric-sulfuric acid anhydride bond driven by GTP hydrolysis by CysN coupled to ATP hydrolysis by CysD. This Bradyrhizobium sp. (strain BTAi1 / ATCC BAA-1182) protein is Sulfate adenylyltransferase subunit 2.